A 54-amino-acid polypeptide reads, in one-letter code: Large ribosomal subunit protein bL33C (54 aa).

The protein belongs to the bacterial ribosomal protein bL33 family.

The sequence is that of Large ribosomal subunit protein bL33C from Streptomyces griseus subsp. griseus (strain JCM 4626 / CBS 651.72 / NBRC 13350 / KCC S-0626 / ISP 5235).